The primary structure comprises 571 residues: Potassium-transporting ATPase potassium-binding subunit (571 aa).

11 helical membrane passes run Leu-3–Leu-23, Leu-64–Ile-84, Leu-135–Leu-155, Leu-179–Pro-199, Leu-254–Phe-274, Gly-284–Ala-304, Phe-330–Val-350, Phe-357–Val-376, Met-421–Leu-441, Leu-488–Gly-508, and Gly-527–Phe-547.

Belongs to the KdpA family. In terms of assembly, the system is composed of three essential subunits: KdpA, KdpB and KdpC.

The protein resides in the cell inner membrane. In terms of biological role, part of the high-affinity ATP-driven potassium transport (or Kdp) system, which catalyzes the hydrolysis of ATP coupled with the electrogenic transport of potassium into the cytoplasm. This subunit binds the periplasmic potassium ions and delivers the ions to the membrane domain of KdpB through an intramembrane tunnel. The polypeptide is Potassium-transporting ATPase potassium-binding subunit (Methylorubrum populi (strain ATCC BAA-705 / NCIMB 13946 / BJ001) (Methylobacterium populi)).